The following is a 122-amino-acid chain: Large ribosomal subunit protein uL14 (122 aa).

Belongs to the universal ribosomal protein uL14 family. As to quaternary structure, part of the 50S ribosomal subunit. Forms a cluster with proteins L3 and L19. In the 70S ribosome, L14 and L19 interact and together make contacts with the 16S rRNA in bridges B5 and B8.

Its function is as follows. Binds to 23S rRNA. Forms part of two intersubunit bridges in the 70S ribosome. This chain is Large ribosomal subunit protein uL14, found in Treponema denticola (strain ATCC 35405 / DSM 14222 / CIP 103919 / JCM 8153 / KCTC 15104).